A 215-amino-acid chain; its full sequence is Deoxyribose-phosphate aldolase (215 aa).

The Proton donor/acceptor role is filled by Asp90. Lys152 acts as the Schiff-base intermediate with acetaldehyde in catalysis. Lys181 acts as the Proton donor/acceptor in catalysis.

The protein belongs to the DeoC/FbaB aldolase family. DeoC type 1 subfamily.

The protein resides in the cytoplasm. The enzyme catalyses 2-deoxy-D-ribose 5-phosphate = D-glyceraldehyde 3-phosphate + acetaldehyde. The protein operates within carbohydrate degradation; 2-deoxy-D-ribose 1-phosphate degradation; D-glyceraldehyde 3-phosphate and acetaldehyde from 2-deoxy-alpha-D-ribose 1-phosphate: step 2/2. Its function is as follows. Catalyzes a reversible aldol reaction between acetaldehyde and D-glyceraldehyde 3-phosphate to generate 2-deoxy-D-ribose 5-phosphate. The polypeptide is Deoxyribose-phosphate aldolase (Ureaplasma urealyticum serovar 10 (strain ATCC 33699 / Western)).